A 307-amino-acid chain; its full sequence is Lactamase-like protein vrtG (307 aa).

Residues His-97, His-99, Asp-101, and His-102 each contribute to the Zn(2+) site. Asp-101 serves as the catalytic Proton donor/acceptor.

Belongs to the metallo-beta-lactamase superfamily. The cofactor is Zn(2+).

It participates in secondary metabolite biosynthesis; terpenoid biosynthesis. In terms of biological role, lactamase-like protein; part of the gene cluster that mediates the biosynthesis of viridicatumtoxin, a tetracycline-like fungal meroterpenoid with a unique, fused spirobicyclic ring system. The first step of the pathway is the production of the malonamoyl-CoA starter unit for the polyketide synthase vrtA. The aldolase vrtJ may be involved in the synthesis of the malonamate substrate for malonamoyl-CoA synthetase vrtB. The polyketide synthase vrtA then may utilize the malonamoyl-CoA starter unit, followed by sequential condensation of eight malonyl-CoA units to form the polyketide backbone. The cyclization of the last ring could be mediated by the lactamase-like protein vrtG. The proposed post-PKS tailoring steps are a hydroxylation at C5 catalyzed the cytochrome P450 monooxygenase vrtE, a hydroxylation at C12a catalyzed by VrtH and/or VrtI, and an O-methylation by the O-methyltransferase vrtF. VrtC is then proposed to catalyze the transfer of a geranyl group synthesized by vrtD to the aromatic C ring of the tetracyclic polyketide intermediate of viridicatumtoxin to yield previridicatumtoxin. Finally, the cytochrome P450 monooxygenase vrtK catalyzes the spirocyclization of the geranyl moiety of previridicatumtoxin to afford viridicatumtoxin. The chain is Lactamase-like protein vrtG from Penicillium aethiopicum.